A 480-amino-acid chain; its full sequence is Ribosomal protein uS12 methylthiotransferase RimO (480 aa).

The MTTase N-terminal domain occupies 14 to 135 (LSVAMVTLGC…IAARLRSIVA (122 aa)). Residues Cys23, Cys59, Cys98, Cys193, Cys197, and Cys200 each coordinate [4Fe-4S] cluster. In terms of domain architecture, Radical SAM core spans 179–410 (LDDGPTAALK…DLVEELTSQR (232 aa)). The region spanning 412–480 (AERLGEQVEV…EGADLDARPL (69 aa)) is the TRAM domain.

This sequence belongs to the methylthiotransferase family. RimO subfamily. Requires [4Fe-4S] cluster as cofactor.

The protein localises to the cytoplasm. The catalysed reaction is L-aspartate(89)-[ribosomal protein uS12]-hydrogen + (sulfur carrier)-SH + AH2 + 2 S-adenosyl-L-methionine = 3-methylsulfanyl-L-aspartate(89)-[ribosomal protein uS12]-hydrogen + (sulfur carrier)-H + 5'-deoxyadenosine + L-methionine + A + S-adenosyl-L-homocysteine + 2 H(+). In terms of biological role, catalyzes the methylthiolation of an aspartic acid residue of ribosomal protein uS12. This chain is Ribosomal protein uS12 methylthiotransferase RimO, found in Nocardioides sp. (strain ATCC BAA-499 / JS614).